A 443-amino-acid chain; its full sequence is Putative phosphoribosyl transferase MT0597 (443 aa).

This sequence in the N-terminal section; belongs to the purine/pyrimidine phosphoribosyltransferase family. In the C-terminal section; belongs to the dienelactone hydrolase family.

The sequence is that of Putative phosphoribosyl transferase MT0597 from Mycobacterium tuberculosis (strain CDC 1551 / Oshkosh).